The chain runs to 562 residues: Arginine--tRNA ligase (562 aa).

A 'HIGH' region motif is present at residues 121-131; sequence PNIAKPFSVGH.

The protein belongs to the class-I aminoacyl-tRNA synthetase family. As to quaternary structure, monomer.

The protein resides in the cytoplasm. It catalyses the reaction tRNA(Arg) + L-arginine + ATP = L-arginyl-tRNA(Arg) + AMP + diphosphate. In Streptococcus uberis (strain ATCC BAA-854 / 0140J), this protein is Arginine--tRNA ligase.